Here is a 431-residue protein sequence, read N- to C-terminus: uncharacterized protein (431 aa).

The next 12 helical transmembrane spans lie at 33–53, 63–83, 111–131, 143–163, 175–195, 197–217, 241–261, 273–293, 318–338, 358–378, 381–401, and 407–427; these read VARVGTAAAVTALCGYAVIYL, FSVFGVFWGAFGLVTGAANGL, VSGMVGLGSLVVIAGSSPLWS, VALLSIGLAGFCLHATLLGML, LMVADAVIRVVVAAATFVIGW, LVGFIWATVAGSVAWLIMLMT, AHSIIAAGASAILVMGFPVLL, GVVILAVTLTRAPLLVPLTAM, LIGGVGAVGMLAAGVVGPWIM, AAAVAIAMLTLTGAAAVAAAL, AYSLGWVGATVGSGLLLLLPL, and TVVALLCGPLVGIGVHLVALA.

To M.tuberculosis Rv1510 and M.bovis Mb3654.

The protein localises to the cell membrane. This is an uncharacterized protein from Mycobacterium tuberculosis (strain ATCC 25618 / H37Rv).